The following is a 447-amino-acid chain: Gastrin/cholecystokinin type B receptor (447 aa).

The Extracellular portion of the chain corresponds to 1–57 (MELLKLNRSVQGTGPGPGASLCRPGAPLLNSSSVGNLSCEPPRIRGAGTRELELAIR). N-linked (GlcNAc...) asparagine glycans are attached at residues Asn7, Asn30, and Asn36. Residues 58 to 79 (ITLYAVIFLMSVGGNMLIIVVL) form a helical membrane-spanning segment. Over 80–87 (GLSRRLRT) the chain is Cytoplasmic. The helical transmembrane segment at 88–109 (VTNAFLLSLAVSDLLLAVACMP) threads the bilayer. Residues 110-131 (FTLLPNLMGTFIFGTVICKAVS) lie on the Extracellular side of the membrane. Residues Cys127 and Cys205 are joined by a disulfide bond. Residues 132-150 (YLMGVSVSVSTLSLVAIAL) traverse the membrane as a helical segment. At 151-170 (ERYSAICRPLQARVWQTRSH) the chain is on the cytoplasmic side. The chain crosses the membrane as a helical span at residues 171–189 (AARVIVATWLLSGLLMVPY). Over 190-219 (PVYTVVQPVGPRVLQCVHRWPSARVRQTWS) the chain is Extracellular. Residues 220–242 (VLLLLLLFFIPGVVMAVAYGLIS) traverse the membrane as a helical segment. The Cytoplasmic portion of the chain corresponds to 243–333 (RELYLGLRFD…KLLAKKRVVR (91 aa)). The interval 258 to 285 (DSQSRVRNQGGLPGAVHQNGRCRPETGA) is disordered. Residues 334–355 (MLLVIVVLFFLCWLPVYSANTW) form a helical membrane-spanning segment. Topologically, residues 356–373 (RAFDGPGAHRALSGAPIS) are extracellular. Residues 374 to 394 (FIHLLSYASACVNPLVYCFMH) traverse the membrane as a helical segment. At 395–447 (RRFRQACLETCARCCPRPPRARPRALPDEDPPTPSIASLSRLSYTTISTLGPG) the chain is on the cytoplasmic side. Cys408 carries S-palmitoyl cysteine lipidation.

Belongs to the G-protein coupled receptor 1 family. As to expression, isoform 1 is expressed in brain, pancreas, stomach, the colon cancer cell line LoVo and the T-lymphoblastoma Jurkat, but not in heart, placenta, liver, lung, skeletal muscle, kidney or the stomach cancer cell line AGS. Expressed at high levels in the small cell lung cancer cell line NCI-H510, at lower levels in NCI-H345, NCI-H69 and GLC-28 cell lines, not expressed in GLC-19 cell line. Within the stomach, expressed at high levels in the mucosa of the gastric fundus and at low levels in the antrum and duodenum. Isoform 2 is present in pancreatic cancer cells and colorectal cancer cells, but not in normal pancreas or colonic mucosa. Isoform 3 is expressed in brain, pancreas, stomach, the stomach cancer cell line AGS and the colon cancer cell line LoVo.

It localises to the cell membrane. Its function is as follows. Receptor for gastrin and cholecystokinin. The CCK-B receptors occur throughout the central nervous system where they modulate anxiety, analgesia, arousal, and neuroleptic activity. This receptor mediates its action by association with G proteins that activate a phosphatidylinositol-calcium second messenger system. Isoform 2 is constitutively activated and may regulate cancer cell proliferation via a gastrin-independent mechanism. This chain is Gastrin/cholecystokinin type B receptor, found in Homo sapiens (Human).